We begin with the raw amino-acid sequence, 506 residues long: uncharacterized protein (506 aa).

This sequence belongs to the Mg-chelatase subunits D/I family. ComM subfamily.

This is an uncharacterized protein from Escherichia coli (strain K12).